The following is a 324-amino-acid chain: MTAHLKKAELHCHIEGATPPELALRQARKYGVDTSAIIRDRAYVWEDFTSFVRCYDAVASLFRTEGDYALLAETYLTELAKAGTIYSEIIVSPDHGVTIGLGADAYIEGLAAGMEAARVKTGIESRMLITGIRHLGPDSVIRTAEYAAMRRHPLVTGFNLAGEERMHSVAEFSRAFDIVRDAGLGLTIHAGELSGAFSVRDALDHVRPARISHGVRAIEDGDLVKRLADEGVVLEVCPGSNVALQVFPDFASHPLRRLYEAGVRVTLNSDDPPFFHTSLAQEYEIAFHAMGFSDSEIDRMTKTAIEAAFVDEPTREKLLAALHV.

Zn(2+) contacts are provided by His-11, His-13, and His-189. The Proton donor role is filled by Glu-192. Residue Asp-270 coordinates Zn(2+). Asp-271 serves as a coordination point for substrate.

Belongs to the metallo-dependent hydrolases superfamily. Adenosine and AMP deaminases family. Adenine deaminase type 2 subfamily. It depends on Zn(2+) as a cofactor.

It carries out the reaction adenine + H2O + H(+) = hypoxanthine + NH4(+). Catalyzes the hydrolytic deamination of adenine to hypoxanthine. Plays an important role in the purine salvage pathway and in nitrogen catabolism. The protein is Adenine deaminase of Rhizobium meliloti (strain 1021) (Ensifer meliloti).